A 196-amino-acid chain; its full sequence is ATP-dependent Clp protease proteolytic subunit (196 aa).

The active-site Nucleophile is S101. The active site involves H126.

It belongs to the peptidase S14 family. As to quaternary structure, component of the chloroplastic Clp protease core complex.

The protein localises to the plastid. The protein resides in the chloroplast stroma. The catalysed reaction is Hydrolysis of proteins to small peptides in the presence of ATP and magnesium. alpha-casein is the usual test substrate. In the absence of ATP, only oligopeptides shorter than five residues are hydrolyzed (such as succinyl-Leu-Tyr-|-NHMec, and Leu-Tyr-Leu-|-Tyr-Trp, in which cleavage of the -Tyr-|-Leu- and -Tyr-|-Trp bonds also occurs).. In terms of biological role, cleaves peptides in various proteins in a process that requires ATP hydrolysis. Has a chymotrypsin-like activity. Plays a major role in the degradation of misfolded proteins. The polypeptide is ATP-dependent Clp protease proteolytic subunit (Lactuca sativa (Garden lettuce)).